Reading from the N-terminus, the 834-residue chain is MIFKKLFSKGSTSPTTRPRGATFSGTFPTDVLSDDGSGTNTNGLSNSTTNPSSIHSTPTTPTTTASTNLTNSNKLSTLAPITNGNRSLRGSKDGSGTTKESKKKVLTLNEKQKLLLKSMEYIKGSGTYYGNYMEFYEIPIQIYVGTEPSETYPSLSYNTELRSLILDFNKITEIPEQIGLLPNLKHLSLAANQLSQVPEFLSQLKSLESLELGINQFTSFPLNICKIKSLTLLRLETNNIKSLPDDFINLENLKDLSLLDNQLKEIPDSLPNNIEKLNLGCNDIINSYSKSLIRISHSLTTLNLSENKIEVLDESLSCLVNVKTLILDCNMIKVIPGSVLGSWKSLVTLNLPHNFISDLPAEIVTLDNLRIIDLRGNNFEFCKNYPSSESSSILFKIEEFIKDKEKLKSLILKENLEILSKLKDDNSTTTTTNINSNLDVPIIITTNIETIPTTSTTATTTETTNDITFKISDITEIIEKTDTTTTTTTTNQTDNVKLEEKVYEKQENDENNSVTLETTTTISIASDNTDEASIQIPQKEDGDKENLENDDKLLQESFSENNNNNNNEKQQEQQENPLKESQGKIQQLEEELEKLEQKQLELKDKIRLEKIKYQEIQQQSPRLSQQENNQEAIVVNTQPSSPPPTIIVNEQKSEKLENEKPTKREQPMVVVTKNNNKAEVEMTAPNQLIFWQSIVPDLIIDKLYLGCRECAMNKSWLKDNNVTHILTVANFKPLYPDLFKYLIINIDDVDEANIYQYFKEMNTFIDEGREKGGVLIHCRAGVSRSATATIAYIMMKNSVKFQEAFDITIKGRSRIYPNRGFLNQLKKFEKDLSK.

The disordered stretch occupies residues 1 to 103 (MIFKKLFSKG…GSGTTKESKK (103 aa)). Low complexity predominate over residues 36–78 (GSGTNTNGLSNSTTNPSSIHSTPTTPTTTASTNLTNSNKLSTL). Positions 79–98 (APITNGNRSLRGSKDGSGTT) are enriched in polar residues. 10 LRR repeats span residues 160–181 (ELRSLILDFNKITEIPEQIGLL), 183–204 (NLKHLSLAANQLSQVPEFLSQL), 206–226 (SLESLELGINQFTSFPLNICK), 229–251 (SLTLLRLETNNIKSLPDDFINLE), 252–273 (NLKDLSLLDNQLKEIPDSLPNN), 274–292 (IEKLNLGCNDIINSYSKSL), 298–319 (SLTTLNLSENKIEVLDESLSCL), 321–342 (NVKTLILDCNMIKVIPGSVLGS), 345–366 (SLVTLNLPHNFISDLPAEIVTL), and 368–389 (NLRIIDLRGNNFEFCKNYPSSE). Positions 503–584 (YEKQENDENN…ENPLKESQGK (82 aa)) are disordered. Residues 511-536 (NNSVTLETTTTISIASDNTDEASIQI) are compositionally biased toward polar residues. 2 stretches are compositionally biased toward basic and acidic residues: residues 538–554 (QKEDGDKENLENDDKLL) and 569–582 (KQQEQQENPLKESQ). Residues 555–615 (QESFSENNNN…IRLEKIKYQE (61 aa)) are a coiled coil. Residues 695–834 (VPDLIIDKLY…LKKFEKDLSK (140 aa)) enclose the Tyrosine-protein phosphatase domain. Cysteine 778 (phosphocysteine intermediate) is an active-site residue.

This sequence belongs to the protein-tyrosine phosphatase family. Non-receptor class dual specificity subfamily.

It carries out the reaction O-phospho-L-tyrosyl-[protein] + H2O = L-tyrosyl-[protein] + phosphate. It catalyses the reaction O-phospho-L-seryl-[protein] + H2O = L-seryl-[protein] + phosphate. The catalysed reaction is O-phospho-L-threonyl-[protein] + H2O = L-threonyl-[protein] + phosphate. Functionally, probable phosphatase with dual specificity toward Ser/Thr and Tyr-containing proteins. Dephosphorylates pNPP, in vitro. Essential for proper regulation of erkB (erk2) and optimal motility during development. The sequence is that of MAP kinase phosphatase with leucine-rich repeats protein 1 (mpl1) from Dictyostelium discoideum (Social amoeba).